Here is a 191-residue protein sequence, read N- to C-terminus: tRNA-specific adenosine deaminase 2 (191 aa).

The CMP/dCMP-type deaminase domain occupies 20–145 (EETEKWMEEA…SVLNIASADL (126 aa)). Histidine 71 serves as a coordination point for Zn(2+). Residue glutamate 73 is the Proton donor of the active site. Positions 107 and 110 each coordinate Zn(2+).

It belongs to the cytidine and deoxycytidylate deaminase family. ADAT2 subfamily. It depends on Zn(2+) as a cofactor.

It catalyses the reaction adenosine(34) in tRNA + H2O + H(+) = inosine(34) in tRNA + NH4(+). Functionally, probably participates in deamination of adenosine-34 to inosine in many tRNAs. The chain is tRNA-specific adenosine deaminase 2 (ADAT2) from Homo sapiens (Human).